The chain runs to 786 residues: Aculeacin-A acylase (786 aa).

The signal sequence occupies residues 1 to 22; that stretch reads MTSSYMRLKAAAIAFGVIVATA. Residues 23–34 constitute a propeptide that is removed on maturation; the sequence is AVPSPASGREHD. The tract at residues 35–130 is substrate-binding; that stretch reads GGYAALIRRA…PRDGVRAPCD (96 aa). A propeptide spans 215-229 (spacer peptide); the sequence is AAIAAALDGTSAGIG. Residues 220–239 form a possible recognition-sequence of an AAC processing enzyme region; sequence ALDGTSAGIGSNAYGLGAQA. Ser230 (nucleophile) is an active-site residue. The segment at 658-689 is disordered; that stretch reads ACNGSPASPSTRSVGDIHTDSRGERRIPIHGG. The segment covering 672–684 has biased composition (basic and acidic residues); it reads GDIHTDSRGERRI.

The protein belongs to the peptidase S45 family. As to quaternary structure, heterodimer of a small subunit and a large subunit processed from the same precursor.

The protein resides in the secreted. Catalyzes the hydrolysis of the palmitoyl moiety of the antifungal antibiotic, aculeacin-A, giving a hexapeptide moiety and a long chain fatty acid. The chain is Aculeacin-A acylase (aac) from Actinoplanes utahensis.